Here is an 87-residue protein sequence, read N- to C-terminus: Small ribosomal subunit protein bS16 (87 aa).

This sequence belongs to the bacterial ribosomal protein bS16 family.

The chain is Small ribosomal subunit protein bS16 from Ehrlichia chaffeensis (strain ATCC CRL-10679 / Arkansas).